A 586-amino-acid chain; its full sequence is MATPNVNTLWGQTVADELATVGIETAVLAPGSRSTPLAVAFAQHDDIEAVSLLDERSAAFFALGYAKRTGQPAPLVCTSGTALANFHPAVIEADTARVPMVLLTADRPPELADSGANQTIDQADLYGDAVRSYRTLPEPEAAARKLRSLRTTLCRAVGTATGTEPGPVHLNVPFRKPLEPLAAAEPPAGVPDGAVPDGFATENPLAARGRDGPFVEVHSGCTDPSATTVDELATAVEAAASGLIVCGPTDRPAPDAESLVALADATGFSVFADPLSGLRFGPHVDDAPVCGGYDAYLPALEQTPEVVIRFGASPTSKPLRQYLRDADARQFIVDPAGGWREATFTATDLVVADETRLATAVADAVDRTPGSYADRLAELEPGYWRLVEGEEPQEGAMLADAVALAPDPSTVFVSNSMPVRDLDRFGAPQAASLSVLGNRGASGIDGIASTALGAGFGTDDPLVAVTGDLAYYHDMNGLLAVSRAGVDATIVCINNDGGGIFHVLPIEAHESFDKWFRTPHGLDFEPSAALYDIEFARTDSREGFRSLYSEAVGSGETQVIEVQTESGHNHADRTALREAVVEELGR.

Belongs to the TPP enzyme family. MenD subfamily. As to quaternary structure, homodimer. Mg(2+) is required as a cofactor. It depends on Mn(2+) as a cofactor. Requires thiamine diphosphate as cofactor.

It carries out the reaction isochorismate + 2-oxoglutarate + H(+) = 5-enolpyruvoyl-6-hydroxy-2-succinyl-cyclohex-3-ene-1-carboxylate + CO2. It participates in quinol/quinone metabolism; 1,4-dihydroxy-2-naphthoate biosynthesis; 1,4-dihydroxy-2-naphthoate from chorismate: step 2/7. The protein operates within quinol/quinone metabolism; menaquinone biosynthesis. Functionally, catalyzes the thiamine diphosphate-dependent decarboxylation of 2-oxoglutarate and the subsequent addition of the resulting succinic semialdehyde-thiamine pyrophosphate anion to isochorismate to yield 2-succinyl-5-enolpyruvyl-6-hydroxy-3-cyclohexene-1-carboxylate (SEPHCHC). This Natronomonas pharaonis (strain ATCC 35678 / DSM 2160 / CIP 103997 / JCM 8858 / NBRC 14720 / NCIMB 2260 / Gabara) (Halobacterium pharaonis) protein is 2-succinyl-5-enolpyruvyl-6-hydroxy-3-cyclohexene-1-carboxylate synthase.